We begin with the raw amino-acid sequence, 315 residues long: Glycerol-3-phosphate dehydrogenase [NAD(P)+] (315 aa).

NADPH is bound by residues W24, R44, R45, and K92. Positions 92 and 120 each coordinate sn-glycerol 3-phosphate. S124 serves as a coordination point for NADPH. K175, D228, S238, R239, and N240 together coordinate sn-glycerol 3-phosphate. Residue K175 is the Proton acceptor of the active site. R239 is an NADPH binding site. E265 contributes to the NADPH binding site.

This sequence belongs to the NAD-dependent glycerol-3-phosphate dehydrogenase family.

It localises to the cytoplasm. The enzyme catalyses sn-glycerol 3-phosphate + NAD(+) = dihydroxyacetone phosphate + NADH + H(+). It catalyses the reaction sn-glycerol 3-phosphate + NADP(+) = dihydroxyacetone phosphate + NADPH + H(+). The protein operates within membrane lipid metabolism; glycerophospholipid metabolism. In terms of biological role, catalyzes the reduction of the glycolytic intermediate dihydroxyacetone phosphate (DHAP) to sn-glycerol 3-phosphate (G3P), the key precursor for phospholipid synthesis. The protein is Glycerol-3-phosphate dehydrogenase [NAD(P)+] of Synechococcus sp. (strain JA-2-3B'a(2-13)) (Cyanobacteria bacterium Yellowstone B-Prime).